A 605-amino-acid polypeptide reads, in one-letter code: Protein cueball (605 aa).

The signal sequence occupies residues 1-31 (MAYIDQKHNTFWDDFAIALRDKIVFLNSTWG). N-linked (GlcNAc...) asparagine glycans are attached at residues N27, N64, and N85. Over 32–486 (EIHASAHRFE…QCGPAPPVQG (455 aa)) the chain is Extracellular. LDL-receptor class B repeat units lie at residues 53–97 (EMIY…DPLN), 98–145 (RNLF…DICR), 146–190 (RQLY…DQLS), and 191–236 (DRIF…NEDA). N261 and N314 each carry an N-linked (GlcNAc...) asparagine glycan. 2 consecutive EGF-like domains span residues 322 to 359 (EGDR…ARCE) and 394 to 431 (EYHK…ERCE). 5 disulfides stabilise this stretch: C334/C347, C349/C358, C398/C408, C402/C419, and C421/C430. Residues N433 and N464 are each glycosylated (N-linked (GlcNAc...) asparagine). The helical transmembrane segment at 487–507 (PLIIVIVLGLVTTSGLVALTV) threads the bilayer. Topologically, residues 508 to 605 (HGVRLIYKPK…IHSMEDNLLS (98 aa)) are cytoplasmic.

This sequence belongs to the cueball family.

Its subcellular location is the cell membrane. In terms of biological role, has a role in spermatogenesis and oogenesis. The protein is Protein cueball of Drosophila grimshawi (Hawaiian fruit fly).